A 659-amino-acid chain; its full sequence is Exoribonuclease 2 (659 aa).

The 343-residue stretch at 189-531 (RKDLTALHFV…NHRLIKACIA (343 aa)) folds into the RNB domain. In terms of domain architecture, S1 motif spans 576-658 (KPEFQAEVQD…ETRSLIGNLV (83 aa)).

This sequence belongs to the RNR ribonuclease family. RNase II subfamily.

Its subcellular location is the cytoplasm. The catalysed reaction is Exonucleolytic cleavage in the 3'- to 5'-direction to yield nucleoside 5'-phosphates.. Its function is as follows. Involved in mRNA degradation. Hydrolyzes single-stranded polyribonucleotides processively in the 3' to 5' direction. In Actinobacillus succinogenes (strain ATCC 55618 / DSM 22257 / CCUG 43843 / 130Z), this protein is Exoribonuclease 2.